Reading from the N-terminus, the 354-residue chain is Protein RecA (354 aa).

67–74 (GPESSGKT) is a binding site for ATP. Residues 331–354 (NQDSTPDFSVDDNGEGVKETNEDF) form a disordered region. Basic and acidic residues predominate over residues 345-354 (EGVKETNEDF).

The protein belongs to the RecA family.

The protein resides in the cytoplasm. Can catalyze the hydrolysis of ATP in the presence of single-stranded DNA, the ATP-dependent uptake of single-stranded DNA by duplex DNA, and the ATP-dependent hybridization of homologous single-stranded DNAs. It interacts with LexA causing its activation and leading to its autocatalytic cleavage. The sequence is that of Protein RecA from Citrobacter koseri (strain ATCC BAA-895 / CDC 4225-83 / SGSC4696).